The primary structure comprises 351 residues: Soluble interferon alpha/beta receptor OPG204 (351 aa).

A signal peptide spans 1–23; that stretch reads MKMKMMVRIYFVSLSLLLFHSYA. Ig-like C2-type domains are found at residues 65–137 and 155–237; these read LGEP…KNGD and PKTY…IVVS. 2 disulfide bridges follow: Cys-73–Cys-129 and Cys-172–Cys-221. Residues Asn-117, Asn-182, Asn-261, Asn-269, and Asn-321 are each glycosylated (N-linked (GlcNAc...) asparagine; by host). The 100-residue stretch at 246–345 folds into the Ig-like V-type domain; it reads PSQDHRFKLI…HNYYFDKTLT (100 aa). Cysteines 272 and 333 form a disulfide.

Belongs to the interleukin-1 receptor family. Interacts with host IFNA1.

The protein resides in the secreted. Counteracts the antiviral effects of host IFN-alpha/beta and key IFN-inducible proteins involved in viral RNA degradation suxh as host OAS1. Acts as a soluble IFN-alpha receptor and thus inhibits the interaction between host IFN-alpha and its receptor. This chain is Soluble interferon alpha/beta receptor OPG204 (OPG204), found in Cynomys gunnisoni (Gunnison's prairie dog).